The sequence spans 1061 residues: E3 ubiquitin-protein ligase Smurf1 (1061 aa).

Residues 1 to 116 enclose the C2 domain; the sequence is MNKLDYPRRN…KGAGFQRLDL (116 aa). Disordered stretches follow at residues 143 to 176 and 188 to 496; these read SGNP…WEER and HATK…SGQR. The 34-residue stretch at 167–200 folds into the WW 1 domain; the sequence is DSLPEGWEERRTDNGRVYYVNHATKSTQWDRPRQ. Composition is skewed to polar residues over residues 207–225 and 233–255; these read SHAT…NSGD and TRST…SVTA. Serine 262 bears the Phosphoserine mark. Residues 264-273 are compositionally biased toward polar residues; the sequence is EILSSVGKEN. Composition is skewed to low complexity over residues 274-300 and 311-322; these read TSPT…SAGG and PATPTSSTTSAS. Positions 348 to 359 are enriched in polar residues; it reads TPTSPTGQQNYV. Low complexity predominate over residues 360–378; it reads NGNAQNGSTSGNGSGQAAQ. Residues 379 to 392 show a composition bias toward polar residues; it reads PQSASNGWTQEDAA. Residues 393-409 show a composition bias toward low complexity; it reads TTTSPSTTTSPPRHSQS. Threonine 412 carries the post-translational modification Phosphothreonine. At serine 416 the chain carries Phosphoserine. The span at 417–439 shows a compositional bias: polar residues; it reads PPASVTPSANGNVHSPNANSTPA. Positions 480–494 are enriched in gly residues; that stretch reads RNGGTSGGGGGGGSG. 2 WW domains span residues 513 to 546 and 561 to 594; these read LDLP…DPRI and GPLP…DPRL. Residues 513–602 form an interaction with MAD region; sequence LDLPPGYEMR…RLSGSILQMI (90 aa). Low complexity-rich tracts occupy residues 608-617 and 624-656; these read PPTSAANAGT and TPAT…TNPP. The disordered stretch occupies residues 608-661; it reads PPTSAANAGTPAPPSATPATPSAAAAVPPQATPASNATPTTLTTTTNPPHRIVP. In terms of domain architecture, HECT spans 723–1061; the sequence is RAKDMRKRLM…VEETCGFAVE (339 aa). The Glycyl thioester intermediate role is filled by cysteine 1029.

As to quaternary structure, interacts with phosphorylated MAD.

It carries out the reaction S-ubiquitinyl-[E2 ubiquitin-conjugating enzyme]-L-cysteine + [acceptor protein]-L-lysine = [E2 ubiquitin-conjugating enzyme]-L-cysteine + N(6)-ubiquitinyl-[acceptor protein]-L-lysine.. It functions in the pathway protein modification; protein ubiquitination. Its function is as follows. E3 ubiquitin-protein ligase which accepts ubiquitin from an E2 ubiquitin-conjugating enzyme in the form of a thioester and then directly transfers the ubiquitin to targeted substrates. Down-regulates Dpp signaling after gastrulation by promoting MAD ubiquitination and subsequent degradation. This chain is E3 ubiquitin-protein ligase Smurf1, found in Drosophila melanogaster (Fruit fly).